The primary structure comprises 693 residues: CREB-regulated transcription coactivator 2 (693 aa).

Residues 1–20 (MATSGANGPGSATASASNPR) show a composition bias toward polar residues. The tract at residues 1 to 30 (MATSGANGPGSATASASNPRKFSEKIALQK) is disordered. Ala-2 is modified (N-acetylalanine). At Arg-51 the chain carries Asymmetric dimethylarginine; by PRMT6. Phosphoserine is present on residues Ser-70, Ser-86, and Ser-90. Asymmetric dimethylarginine; by PRMT6 is present on residues Arg-99, Arg-120, and Arg-123. Ser-136 carries the phosphoserine modification. Residues Arg-161 and Arg-168 each carry the asymmetric dimethylarginine; by PRMT6 modification. Thr-169 is subject to Phosphothreonine. Ser-171 is subject to Phosphoserine; by AMPK, MARK2, SIK1 and SIK2. Thr-192 carries the post-translational modification Phosphothreonine. Residue Lys-234 forms a Glycyl lysine isopeptide (Lys-Gly) (interchain with G-Cter in SUMO2) linkage. Positions 271–287 (TGGSLPDLTNLHFPPPL) match the Nuclear export signal motif. Ser-274 bears the Phosphoserine; by MARK2 mark. 2 disordered regions span residues 282-306 (HFPP…GGNS) and 328-554 (GYDA…MSDF). Residues Ser-306, Ser-368, Ser-393, Ser-433, and Ser-456 each carry the phosphoserine modification. 2 stretches are compositionally biased toward low complexity: residues 331 to 378 (APGL…SSLA) and 386 to 415 (SLGH…GAPS). Over residues 447–468 (SQQQLPKQFSPTMSPTLSSITQ) the composition is skewed to polar residues. Residue Tyr-488 is modified to Phosphotyrosine. Residues Ser-489, Ser-490, and Ser-492 each carry the phosphoserine modification. The segment covering 498 to 507 (QPHTPKSLQQ) has biased composition (polar residues). A Phosphothreonine modification is found at Thr-501. Residues 509-529 (GLPSQSCSVQSSGGQPPGRQS) show a composition bias toward low complexity. Phosphoserine is present on residues Ser-613, Ser-623, and Ser-624.

The protein belongs to the TORC family. Binds, as a tetramer, through its N-terminal region, with the bZIP domain of CREB1. 'Arg-314' in the bZIP domain of CREB1 is essential for this interaction. Interaction, via its C-terminal, with TAF4, enhances recruitment of TAF4 to CREB1. Interacts with SIK2. Interacts with 14-3-3 proteins, YWHAB and YWHAG. Interacts (probably when phosphorylated at Ser-171) with YWHAE. Interacts with calmodulin-dependent catalytic subunit PPP3CA/calcineurin A. Interaction with COP1 mediates nuclear export and degradation of CRTC2. In terms of assembly, (Microbial infection) Interaction with the human T-cell leukemia virus type 1 (HTLV-1) Tax protein is essential for optimal transcription activation by Tax. Post-translationally, phosphorylation/dephosphorylation states of Ser-171 are required for regulating transduction of CREB activity. CRTCs/TORCs are inactive when phosphorylated, and active when dephosphorylated at this site. This primary site of phosphorylation, is regulated by cAMP and calcium levels and is dependent on the phosphorylation of SIKs (SIK1 and SIK2) by LKB1. Following adenylyl cyclase activation, dephosphorylated at Ser-171 by PPP3CA/calcineurin A resulting in CRTC2 dissociation from 14-3-3 proteins and PPP3CA. Both insulin and AMPK increase this phosphorylation of CRTC2 while glucagon suppresses it. Phosphorylation at Ser-274 by MARK2 is induced under low glucose conditions and dephosphorylated in response to glucose influx. Phosphorylation at Ser-274 promotes interaction with 14-3-3 proteins and translocation to the cytoplasm. In terms of processing, asymmetric dimethylation of arginine resisues by PRMT6 enhances the association of CRTC2 with CREB on the promoters of gluconeogenic genes. In terms of tissue distribution, most abundantly expressed in the thymus. Present in both B and T-lymphocytes. Highly expressed in HEK293T cells and in insulinomas. High levels also in spleen, ovary, muscle and lung, with highest levels in muscle. Lower levels found in brain, colon, heart, kidney, prostate, small intestine and stomach. Weak expression in liver and pancreas.

The protein resides in the cytoplasm. The protein localises to the nucleus. In terms of biological role, transcriptional coactivator for CREB1 which activates transcription through both consensus and variant cAMP response element (CRE) sites. Acts as a coactivator, in the SIK/TORC signaling pathway, being active when dephosphorylated and acts independently of CREB1 'Ser-133' phosphorylation. Enhances the interaction of CREB1 with TAF4. Regulates gluconeogenesis as a component of the LKB1/AMPK/TORC2 signaling pathway. Regulates the expression of specific genes such as the steroidogenic gene, StAR. Potent coactivator of PPARGC1A and inducer of mitochondrial biogenesis in muscle cells. Also coactivator for TAX activation of the human T-cell leukemia virus type 1 (HTLV-1) long terminal repeats (LTR). The chain is CREB-regulated transcription coactivator 2 (CRTC2) from Homo sapiens (Human).